The chain runs to 171 residues: Large ribosomal subunit protein bL9 (171 aa).

This sequence belongs to the bacterial ribosomal protein bL9 family.

In terms of biological role, binds to the 23S rRNA. The chain is Large ribosomal subunit protein bL9 from Rickettsia rickettsii (strain Iowa).